Reading from the N-terminus, the 328-residue chain is m7GpppN-mRNA hydrolase NUDT17 (328 aa).

Residues 90-236 (GVDLGVAVIL…DGTETPGLLP (147 aa)) enclose the Nudix hydrolase domain. The Nudix box signature appears at 127 to 148 (GHVELEEELLDGGLRELWEESG). Mg(2+) contacts are provided by E142 and E146. The disordered stretch occupies residues 299–328 (PCKSAAYLDPGPAKEEWNMDPLPPNQGSGK).

This sequence belongs to the Nudix hydrolase family. Mg(2+) is required as a cofactor. It depends on Mn(2+) as a cofactor.

The catalysed reaction is a 5'-end (N(7)-methyl 5'-triphosphoguanosine)-ribonucleoside in mRNA + H2O = N(7)-methyl-GDP + a 5'-end phospho-ribonucleoside in mRNA + 2 H(+). Its function is as follows. Acts as a decapping enzyme capable of hydrolyzing monomethylated capped RNAs (in vitro). Hydrolyzes monomethylated capped RNA after alpha and beta phosphates to form N(7)-methyl-GDP. Shows low activity towards unmethylated capped RNA. This is m7GpppN-mRNA hydrolase NUDT17 (NUDT17) from Homo sapiens (Human).